The sequence spans 182 residues: Probable inosine/xanthosine triphosphatase (182 aa).

Glutamate 65 lines the Mg(2+) pocket. 65–66 (EA) is a binding site for substrate.

Belongs to the YjjX NTPase family. As to quaternary structure, homodimer. Mg(2+) serves as cofactor. The cofactor is Mn(2+).

The enzyme catalyses XTP + H2O = XDP + phosphate + H(+). It carries out the reaction ITP + H2O = IDP + phosphate + H(+). Its function is as follows. Phosphatase that hydrolyzes non-canonical purine nucleotides such as XTP and ITP to their respective diphosphate derivatives. Probably excludes non-canonical purines from DNA/RNA precursor pool, thus preventing their incorporation into DNA/RNA and avoiding chromosomal lesions. The polypeptide is Probable inosine/xanthosine triphosphatase (Pyrobaculum neutrophilum (strain DSM 2338 / JCM 9278 / NBRC 100436 / V24Sta) (Thermoproteus neutrophilus)).